We begin with the raw amino-acid sequence, 248 residues long: Floral homeotic protein AGAMOUS (248 aa).

The MADS-box domain occupies 19–73; it reads RGKIEIKRIENTTNRQVTFCKRRNGLLKKAYELSVLCDAEVALIVFSSRGRLYEY. Residues 103–193 enclose the K-box domain; it reads AQYYQQEASK…RAKIAETERA (91 aa). Positions 196 to 219 are disordered; it reads QQQQQQMNLMPGSSSYELVPPPHQ. Over residues 202–211 the composition is skewed to polar residues; the sequence is MNLMPGSSSY.

It is found in the nucleus. In terms of biological role, probable transcription factor involved in regulating genes that determines stamen and carpel development in wild-type flowers. This chain is Floral homeotic protein AGAMOUS (AG1), found in Nicotiana tabacum (Common tobacco).